We begin with the raw amino-acid sequence, 313 residues long: Aspartate carbamoyltransferase catalytic subunit (313 aa).

Carbamoyl phosphate contacts are provided by arginine 54 and threonine 55. An L-aspartate-binding site is contributed by lysine 82. Arginine 104, histidine 132, and glutamine 135 together coordinate carbamoyl phosphate. 2 residues coordinate L-aspartate: arginine 165 and arginine 219. Glycine 260 and proline 261 together coordinate carbamoyl phosphate.

The protein belongs to the aspartate/ornithine carbamoyltransferase superfamily. ATCase family. As to quaternary structure, heterododecamer (2C3:3R2) of six catalytic PyrB chains organized as two trimers (C3), and six regulatory PyrI chains organized as three dimers (R2).

It catalyses the reaction carbamoyl phosphate + L-aspartate = N-carbamoyl-L-aspartate + phosphate + H(+). It participates in pyrimidine metabolism; UMP biosynthesis via de novo pathway; (S)-dihydroorotate from bicarbonate: step 2/3. Catalyzes the condensation of carbamoyl phosphate and aspartate to form carbamoyl aspartate and inorganic phosphate, the committed step in the de novo pyrimidine nucleotide biosynthesis pathway. The chain is Aspartate carbamoyltransferase catalytic subunit from Thermobifida fusca (strain YX).